Here is a 155-residue protein sequence, read N- to C-terminus: MQIKQIEGSLSAKDIRFALVVSRFNDFIGQKLVEGAIDCILRHGGSEEQITVYRCPGAFELPMVAKKVAMSGSADAVIALGVIIRGSTPHFDVIAAEATKGIAQVSLDTMIPVSFGVLTTENLEQAIERAGTKAGNKGFDAAMTAMEMVNLYRQF.

Residues Phe-24, Ala-58–Glu-60, and Val-82–Ile-84 contribute to the 5-amino-6-(D-ribitylamino)uracil site. Residue Ser-87–Thr-88 participates in (2S)-2-hydroxy-3-oxobutyl phosphate binding. The active-site Proton donor is the His-90. A 5-amino-6-(D-ribitylamino)uracil-binding site is contributed by Phe-115. Residue Arg-129 coordinates (2S)-2-hydroxy-3-oxobutyl phosphate.

Belongs to the DMRL synthase family.

It carries out the reaction (2S)-2-hydroxy-3-oxobutyl phosphate + 5-amino-6-(D-ribitylamino)uracil = 6,7-dimethyl-8-(1-D-ribityl)lumazine + phosphate + 2 H2O + H(+). The protein operates within cofactor biosynthesis; riboflavin biosynthesis; riboflavin from 2-hydroxy-3-oxobutyl phosphate and 5-amino-6-(D-ribitylamino)uracil: step 1/2. Catalyzes the formation of 6,7-dimethyl-8-ribityllumazine by condensation of 5-amino-6-(D-ribitylamino)uracil with 3,4-dihydroxy-2-butanone 4-phosphate. This is the penultimate step in the biosynthesis of riboflavin. The sequence is that of 6,7-dimethyl-8-ribityllumazine synthase from Chlorobium limicola (strain DSM 245 / NBRC 103803 / 6330).